An 86-amino-acid polypeptide reads, in one-letter code: MPQYQTWEEFSRAAEKLYLADPMKARVVLKYRHSDGNLCVKVTDDLVCLVYKTDQAQDVKKIEKFHSQLMRLMVAKEARNVTMETE.

K52 carries the post-translational modification N6-acetyllysine.

It belongs to the SRP9 family. In terms of assembly, heterodimer with SRP14; binds RNA as heterodimer. Component of a signal recognition particle complex that consists of a 7SL RNA molecule of 300 nucleotides and six protein subunits: SRP72, SRP68, SRP54, SRP19, SRP14 and SRP9.

The protein resides in the cytoplasm. In terms of biological role, component of the signal recognition particle (SRP) complex, a ribonucleoprotein complex that mediates the cotranslational targeting of secretory and membrane proteins to the endoplasmic reticulum (ER). SRP9 together with SRP14 and the Alu portion of the SRP RNA, constitutes the elongation arrest domain of SRP. The complex of SRP9 and SRP14 is required for SRP RNA binding. This chain is Signal recognition particle 9 kDa protein (SRP9), found in Homo sapiens (Human).